The primary structure comprises 507 residues: Cyclin-dependent kinase-like 2 (507 aa).

The Protein kinase domain maps to 4–289 (YENLGLVGEG…CADLLHHDFF (286 aa)). Residues 10 to 18 (VGEGSYGMV) and Lys-33 each bind ATP. The [NKR]KIAxRE signature appears at 45-51 (KKIAMRE). Asp-126 serves as the catalytic Proton acceptor. The interval 365–392 (KTEKGTRASNGSCLHDNGTSHKGLSSTS) is disordered.

The protein belongs to the protein kinase superfamily. CMGC Ser/Thr protein kinase family. CDC2/CDKX subfamily.

It localises to the cytoplasm. It is found in the nucleus. It catalyses the reaction L-seryl-[protein] + ATP = O-phospho-L-seryl-[protein] + ADP + H(+). The catalysed reaction is L-threonyl-[protein] + ATP = O-phospho-L-threonyl-[protein] + ADP + H(+). The polypeptide is Cyclin-dependent kinase-like 2 (Rattus norvegicus (Rat)).